Reading from the N-terminus, the 189-residue chain is Small ribosomal subunit protein uS4 (189 aa).

The 72-residue stretch at 107–178 (RRLQTQVFKL…AGRVKRKNQG (72 aa)) folds into the S4 RNA-binding domain. The segment at 160-189 (HNSPYGGGRAGRVKRKNQGKGGEEGAEEEE) is disordered.

The protein belongs to the universal ribosomal protein uS4 family. As to quaternary structure, component of the small ribosomal subunit. Mature ribosomes consist of a small (40S) and a large (60S) subunit. The 40S subunit contains about 32 different proteins and 1 molecule of RNA (18S). The 60S subunit contains 45 different proteins and 3 molecules of RNA (25S, 5.8S and 5S).

It localises to the cytoplasm. Its function is as follows. Component of the ribosome, a large ribonucleoprotein complex responsible for the synthesis of proteins in the cell. The small ribosomal subunit (SSU) binds messenger RNAs (mRNAs) and translates the encoded message by selecting cognate aminoacyl-transfer RNA (tRNA) molecules. The large subunit (LSU) contains the ribosomal catalytic site termed the peptidyl transferase center (PTC), which catalyzes the formation of peptide bonds, thereby polymerizing the amino acids delivered by tRNAs into a polypeptide chain. The nascent polypeptides leave the ribosome through a tunnel in the LSU and interact with protein factors that function in enzymatic processing, targeting, and the membrane insertion of nascent chains at the exit of the ribosomal tunnel. RPS9B is involved in nucleolar processing of pre-18S ribosomal RNA and ribosome assembly. This is Small ribosomal subunit protein uS4 (RPS9B) from Candida albicans (strain SC5314 / ATCC MYA-2876) (Yeast).